Reading from the N-terminus, the 281-residue chain is MRSLVGLVAVIVTATFYLYSLSVFLPPGPQLHKQSHEGETTDAKDGDEPSEMETASSRLKFPSDLDELKEMAELLQFYKTEHTGYVLLLFCSAYLYKQAFAIPGSSFLNILAGALFGTWFGLLLTCVLTTVGATLCFLLSQAFGKHHIVKLFPDKVAMLQKKVEENRSSLFFFLLFLRFFPMSPNWFLNMTSPILNIPVTLFFMAVFIGLMPYNFICVQTGSMLSQISSLDDLFSWSVVLKLLLTACVALLPGALIRKYSTRHLHLDGLETNGLSQNKKNR.

The N-terminal stretch at 1 to 22 (MRSLVGLVAVIVTATFYLYSLS) is a signal peptide. The interval 32–56 (HKQSHEGETTDAKDGDEPSEMETAS) is disordered. Residues 34-47 (QSHEGETTDAKDGD) show a composition bias toward basic and acidic residues. Helical transmembrane passes span 84-104 (GYVLLLFCSAYLYKQAFAIPG), 107-127 (FLNILAGALFGTWFGLLLTCV), 170-190 (LFFFLLFLRFFPMSPNWFLNM), 197-217 (IPVTLFFMAVFIGLMPYNFIC), and 236-256 (WSVVLKLLLTACVALLPGALI).

Belongs to the TMEM41 family.

It is found in the membrane. The chain is Transmembrane protein 41A-A (tmem41aa) from Danio rerio (Zebrafish).